Here is a 295-residue protein sequence, read N- to C-terminus: Regucalcin (295 aa).

Glutamate 18 lines the a divalent metal cation pocket. Residues arginine 100, asparagine 102, and aspartate 120 each contribute to the substrate site. Residues asparagine 150 and aspartate 200 each contribute to the a divalent metal cation site. Catalysis depends on aspartate 200, which acts as the Proton donor/acceptor.

The protein belongs to the SMP-30/CGR1 family. It depends on Zn(2+) as a cofactor. Mn(2+) is required as a cofactor. The cofactor is Ca(2+). Mg(2+) serves as cofactor.

The protein resides in the cytoplasm. It carries out the reaction D-glucono-1,5-lactone + H2O = D-gluconate + H(+). It participates in cofactor biosynthesis; L-ascorbate biosynthesis via UDP-alpha-D-glucuronate pathway; L-ascorbate from UDP-alpha-D-glucuronate: step 3/4. Gluconolactonase with low activity towards other sugar lactones, including gulonolactone and galactonolactone. Catalyzes a key step in ascorbic acid (vitamin C) biosynthesis. Can also hydrolyze diisopropyl phosphorofluoridate and phenylacetate (in vitro). Calcium-binding protein. Modulates Ca(2+) signaling, and Ca(2+)-dependent cellular processes and enzyme activities. This Danio rerio (Zebrafish) protein is Regucalcin.